We begin with the raw amino-acid sequence, 369 residues long: UDP-N-acetyl-3-dehydro-alpha-D-glucosamine 3-aminotranferase (369 aa).

The residue at position 190 (Lys-190) is an N6-(pyridoxal phosphate)lysine.

Belongs to the DegT/DnrJ/EryC1 family. Pyridoxal 5'-phosphate serves as cofactor.

The catalysed reaction is UDP-2-acetamido-3-amino-2,3-dideoxy-alpha-D-glucopyranose + 2-oxoglutarate = UDP-2-acetamido-3-dehydro-2-deoxy-alpha-D-glucopyranose + L-glutamate. It functions in the pathway bacterial outer membrane biogenesis; LPS lipid A biosynthesis. Its function is as follows. Aminotranferase involved in the synthesis of 2,3-diamino-2,3-dideoxy-D-glucopyranose (GlcN3N), which is a component of lipid A in some species. Catalyzes the amination of UDP-2-acetamido-3-dehydro-2-deoxy-alpha-D-glucopyranose (UDP-3-oxo-GlcNAc) to UDP-2-acetamido-3-amino-2,3-dideoxy-alpha-D-glucopyranose (UDP-GlcNAc3N), using L-glutamate as the amine donor. Other amine donors, such as alanine and glutamine, can substitute for glutamate, but product formation is slower. The polypeptide is UDP-N-acetyl-3-dehydro-alpha-D-glucosamine 3-aminotranferase (Acidithiobacillus ferrooxidans (strain ATCC 23270 / DSM 14882 / CIP 104768 / NCIMB 8455) (Ferrobacillus ferrooxidans (strain ATCC 23270))).